A 177-amino-acid polypeptide reads, in one-letter code: MSRVAKNPVKLPAGVEVKFAGQQLSVKGAKGTLELNVHSSVEVTEEAGELRFSARNGDQQARAMAGTTRALVNNMVQGVSQGFERKLQLVGVGYKAQAKGTVLNLALGFSHPVDYELPAGITAETPSQTDILIKGIDKQLVGQVAAEVRGFRPPEPYKGKGVRYADEVVRRKEAKKK.

It belongs to the universal ribosomal protein uL6 family. In terms of assembly, part of the 50S ribosomal subunit.

Functionally, this protein binds to the 23S rRNA, and is important in its secondary structure. It is located near the subunit interface in the base of the L7/L12 stalk, and near the tRNA binding site of the peptidyltransferase center. In Pseudomonas entomophila (strain L48), this protein is Large ribosomal subunit protein uL6.